The primary structure comprises 347 residues: Phosphoribosylformylglycinamidine cyclo-ligase (347 aa).

Belongs to the AIR synthase family.

It localises to the cytoplasm. It catalyses the reaction 2-formamido-N(1)-(5-O-phospho-beta-D-ribosyl)acetamidine + ATP = 5-amino-1-(5-phospho-beta-D-ribosyl)imidazole + ADP + phosphate + H(+). It functions in the pathway purine metabolism; IMP biosynthesis via de novo pathway; 5-amino-1-(5-phospho-D-ribosyl)imidazole from N(2)-formyl-N(1)-(5-phospho-D-ribosyl)glycinamide: step 2/2. In Hydrogenovibrio crunogenus (strain DSM 25203 / XCL-2) (Thiomicrospira crunogena), this protein is Phosphoribosylformylglycinamidine cyclo-ligase.